A 461-amino-acid chain; its full sequence is MSSFTKDEFDCHILDEGFTAKDILDQKINEVSSSDDKDAFYVADLGDILKKHLRWLKALPRVTPFYAVKCNDSRAIVSTLAAIGTGFDCASKTEIQLVQGLGVPAERVIYANPCKQVSQIKYAASNGVQMMTFDSEIELMKVARAHPKAKLVLRIATDDSKAVCRLSVKFGATLKTSRLLLERAKELNIDVIGVSFHVGSGCTDPETFVQAVSDARCVFDMATEVGFSMHLLDIGGGFPGSEDTKLKFEEITSVINPALDKYFPSDSGVRIIAEPGRYYVASAFTLAVNIIAKKTVWKEQPGSDDEDESNEQTFMYYVNDGVYGSFNCILYDHAHVKALLQKRPKPDEKYYSSSIWGPTCDGLDRIVERCNLPEMHVGDWMLFENMGAYTVAAASTFNGFQRPNIYYVMSRPMWQLMKQIQSHGFPPEVEEQDDGTLPMSCAQESGMDRHPAACASARINV.

K69 bears the N6-(pyridoxal phosphate)lysine mark. Residues S200, G237, and 274–277 each bind pyridoxal 5'-phosphate; that span reads EPGR. At S303 the chain carries Phosphoserine; by CK2. 331-332 is a substrate binding site; it reads YD. C360 (proton donor; shared with dimeric partner) is an active-site residue. An S-nitrosocysteine modification is found at C360. D361 provides a ligand contact to substrate. Pyridoxal 5'-phosphate is bound at residue Y389.

Belongs to the Orn/Lys/Arg decarboxylase class-II family. Homodimer. Only the dimer is catalytically active, as the active sites are constructed of residues from both monomers. Does not form a heterodimer with AZIN2. It depends on pyridoxal 5'-phosphate as a cofactor. In terms of tissue distribution, expressed during testis development in the outer part of the seminiferous tubules.

It catalyses the reaction L-ornithine + H(+) = putrescine + CO2. It functions in the pathway amine and polyamine biosynthesis; putrescine biosynthesis via L-ornithine pathway; putrescine from L-ornithine: step 1/1. Its activity is regulated as follows. Inhibited by antizymes (AZs) OAZ1, OAZ2 and OAZ3 in response to polyamine levels. AZs inhibit the assembly of the functional homodimer by binding to ODC monomers. Additionally, OAZ1 targets ODC monomers for ubiquitin-independent proteolytic destruction by the 26S proteasome. Its function is as follows. Catalyzes the first and rate-limiting step of polyamine biosynthesis that converts ornithine into putrescine, which is the precursor for the polyamines, spermidine and spermine. Polyamines are essential for cell proliferation and are implicated in cellular processes, ranging from DNA replication to apoptosis. This is Ornithine decarboxylase (Odc1) from Mus musculus (Mouse).